The chain runs to 207 residues: Ribosomal RNA small subunit methyltransferase G (207 aa).

S-adenosyl-L-methionine contacts are provided by residues G73, L78, 124–125 (VE), and R139.

The protein belongs to the methyltransferase superfamily. RNA methyltransferase RsmG family.

The protein localises to the cytoplasm. It carries out the reaction guanosine(527) in 16S rRNA + S-adenosyl-L-methionine = N(7)-methylguanosine(527) in 16S rRNA + S-adenosyl-L-homocysteine. Functionally, specifically methylates the N7 position of guanine in position 527 of 16S rRNA. This chain is Ribosomal RNA small subunit methyltransferase G, found in Shigella flexneri.